A 168-amino-acid polypeptide reads, in one-letter code: Probable acetolactate synthase small subunit (168 aa).

Residues 10–84 (IISALVEHKP…DVIKVRDLEP (75 aa)) form the ACT domain.

Belongs to the acetolactate synthase small subunit family. As to quaternary structure, dimer of large and small chains.

The catalysed reaction is 2 pyruvate + H(+) = (2S)-2-acetolactate + CO2. The protein operates within amino-acid biosynthesis; L-isoleucine biosynthesis; L-isoleucine from 2-oxobutanoate: step 1/4. It functions in the pathway amino-acid biosynthesis; L-valine biosynthesis; L-valine from pyruvate: step 1/4. The chain is Probable acetolactate synthase small subunit (ilvH) from Methanothermobacter thermautotrophicus (strain ATCC 29096 / DSM 1053 / JCM 10044 / NBRC 100330 / Delta H) (Methanobacterium thermoautotrophicum).